The following is a 69-amino-acid chain: Purkinje cell protein 4-like protein 1 (69 aa).

Polar residues predominate over residues 1-15; sequence MSELNTKTSPATNQA. The tract at residues 1–47 is disordered; it reads MSELNTKTSPATNQAPGPEEKGKAGSAKKTEDEEEEIDIDLTAPETE. T8 carries the post-translational modification Phosphothreonine. Over residues 18 to 31 the composition is skewed to basic and acidic residues; it reads PEEKGKAGSAKKTE. Positions 46-69 constitute an IQ domain; it reads TEKAALAIQGKFRRFQKRKKDPSS.

It belongs to the PCP4 family.

The protein is Purkinje cell protein 4-like protein 1 (PCP4L1) of Bos taurus (Bovine).